Here is a 242-residue protein sequence, read N- to C-terminus: AA9 family lytic polysaccharide monooxygenase F (242 aa).

A signal peptide spans 1-20 (MVQFKLSTASLLALASYAAA). His-21 provides a ligand contact to Cu(2+). The tract at residues 31–53 (GQTYPGADPHNPNPESPGWQAEN) is disordered. 2 cysteine pairs are disulfide-bonded: Cys-71-Cys-192 and Cys-112-Cys-116. Cu(2+) is bound at residue His-101. The O2 site is built by His-178 and Gln-187. Position 189 (Tyr-189) interacts with Cu(2+).

The protein belongs to the polysaccharide monooxygenase AA9 family. Cu(2+) serves as cofactor.

The protein localises to the secreted. It carries out the reaction [(1-&gt;4)-beta-D-glucosyl]n+m + reduced acceptor + O2 = 4-dehydro-beta-D-glucosyl-[(1-&gt;4)-beta-D-glucosyl]n-1 + [(1-&gt;4)-beta-D-glucosyl]m + acceptor + H2O.. Functionally, lytic polysaccharide monooxygenase (LPMO) that depolymerizes crystalline and amorphous polysaccharides via the oxidation of scissile alpha- or beta-(1-4)-glycosidic bonds, yielding C1 or C4 oxidation products. Catalysis by LPMOs requires the reduction of the active-site copper from Cu(II) to Cu(I) by a reducing agent and H(2)O(2) or O(2) as a cosubstrate. Active on hemicelluloses, including xylan, glucomannan, and xyloglucan. Shows clear activity on cellooligosaccharides, generating C4 oxidation products. Has no activity on ivory nut mannan (INM), a linear beta-1,4-linked mannan without substitutions. The protein is AA9 family lytic polysaccharide monooxygenase F of Malbranchea cinnamomea (Thermophilic fungus).